A 462-amino-acid chain; its full sequence is uncharacterized protein (462 aa).

Residues 1–108 (MEDSNTNKDI…NGQDDQDEMD (108 aa)) form a disordered region. A compositionally biased stretch (basic and acidic residues) spans 36-51 (TVERILERKQKERESK). The segment covering 64–95 (SSPSSLLSSPISSNDNNNNNNNNNNESFDINN) has biased composition (low complexity). The stretch at 119–150 (LLKRKAALAAKKKESLAEQMKKYNQQYDSIIS) forms a coiled coil. Residues 188-208 (SKLQSLNNNTSPSTSSSNLID) form a disordered region. The span at 190–208 (LQSLNNNTSPSTSSSNLID) shows a compositional bias: low complexity.

This is an uncharacterized protein from Dictyostelium discoideum (Social amoeba).